We begin with the raw amino-acid sequence, 365 residues long: Probable tRNA pseudouridine synthase B (365 aa).

Catalysis depends on Asp43, which acts as the Nucleophile. The PUA domain maps to 209-285 (YPKIVVKRSA…DHIFLEADDG (77 aa)). Residues 300–365 (SGSGLHKDIQ…GKERHGRDHQ (66 aa)) form a disordered region. 3 stretches are compositionally biased toward basic and acidic residues: residues 304–318 (LHKDIQRSEGRKDTR), 326–336 (TGPEKTADRVW), and 354–365 (GGGKERHGRDHQ).

This sequence belongs to the pseudouridine synthase TruB family. Type 2 subfamily.

It carries out the reaction uridine(55) in tRNA = pseudouridine(55) in tRNA. Its function is as follows. Could be responsible for synthesis of pseudouridine from uracil-55 in the psi GC loop of transfer RNAs. In Thermoplasma acidophilum (strain ATCC 25905 / DSM 1728 / JCM 9062 / NBRC 15155 / AMRC-C165), this protein is Probable tRNA pseudouridine synthase B.